The sequence spans 353 residues: Inactive metacaspase-4 (353 aa).

The N-myristoyl glycine moiety is linked to residue G2.

It belongs to the peptidase C14B family. Post-translationally, palmitoylated. Proteolytic cleavage by MCA3 occurs prior or during secretion and requires MCA4 membrane localization. Cleavage is dispensable for secretion and parasite growth and virulence in the mammalian host. In vitro, can be cleaved by MCA2 but specifically cleaved by MCA3 in vivo.

The protein resides in the cell projection. Its subcellular location is the cilium. The protein localises to the flagellum membrane. It localises to the secreted. Functionally, inactive metacaspase which plays a role in parasite bloodstream form growth and in parasite virulence within the mammalian host. This is Inactive metacaspase-4 from Trypanosoma brucei brucei.